A 583-amino-acid chain; its full sequence is Torsin-1A-interacting protein 1 (583 aa).

A compositionally biased stretch (basic and acidic residues) spans 1–12 (MAGDGRRAEAVR). 2 disordered regions span residues 1–254 (MAGD…RSSS) and 271–293 (AHDK…WAPQ). Topologically, residues 1 to 338 (MAGDGRRAEA…NASFVKRNRW (338 aa)) are nuclear. Serine 60 carries the post-translational modification Phosphoserine. Composition is skewed to basic and acidic residues over residues 74–101 (VAKE…EVRE) and 115–124 (RPQETEEMKT). 2 positions are modified to phosphoserine: serine 135 and serine 143. Methionine 146 is subject to Methionine sulfoxide. 3 positions are modified to phosphoserine: serine 154, serine 156, and serine 157. The segment covering 165–174 (QTDLSQTISK) has biased composition (polar residues). Phosphoserine occurs at positions 186 and 215. The segment covering 216–225 (EEGETEEDDQ) has biased composition (acidic residues). At threonine 220 the chain carries Phosphothreonine. Phosphoserine occurs at positions 227, 230, and 242. A compositionally biased stretch (basic and acidic residues) spans 238 to 250 (RSRDSDESGDKTT). Positions 277–287 (SVLSSGYQKTP) are enriched in polar residues. Methionine 301 is modified (methionine sulfoxide). Serine 305 carries the phosphoserine modification. A Glycyl lysine isopeptide (Lys-Gly) (interchain with G-Cter in SUMO2) cross-link involves residue lysine 308. Phosphoserine is present on residues serine 309 and serine 315. The tract at residues 309 to 328 (SELGNQSPSTSSRQVTGQPQ) is disordered. Residues 339-355 (WLLPLIAALASGSFWFF) traverse the membrane as a helical segment. Over 356-583 (STPEVETTAV…ENALKRGICL (228 aa)) the chain is Perinuclear space. An interaction with TOR1A region spans residues 356 to 583 (STPEVETTAV…ENALKRGICL (228 aa)). Residues 359-435 (EVETTAVQEF…SEQIADAYSS (77 aa)) adopt a coiled-coil conformation. N-linked (GlcNAc...) asparagine glycosylation occurs at asparagine 399. A Methionine sulfoxide modification is found at methionine 552.

This sequence belongs to the TOR1AIP family. In terms of assembly, interacts with ATP1B4. Interacts with TOR1A (ATP-bound). Interacts with TOR1B, TOR2A and TOR3A. Interacts with VIM. Phosphorylated. Dephosphorylated at Ser-309 and Ser-315 by serine/threonine-protein phosphatase PP1. Expressed in muscle, liver and kidney. As to expression, major isoform present in liver, brain and heart (at protein level). Expressed at lower levels than isoform 4 in lung, kidney and spleen (at protein level). Similar levels of isoforms 1 and 4 are observed in ovary, testis and pancreas (at protein level). In terms of tissue distribution, expressed at higher levels than isoform 1 in lung, kidney and spleen (at protein level). Expressed at lower levels than isoform 1 in liver, brain and heart (at protein level). Similar levels of isoforms 1 and 4 are observed in ovary, testis and pancreas (at protein level).

The protein resides in the nucleus inner membrane. It is found in the nucleus envelope. Its subcellular location is the nucleus. In terms of biological role, required for nuclear membrane integrity. Induces TOR1A and TOR1B ATPase activity and is required for their location on the nuclear membrane. Binds to A- and B-type lamins. Possible role in membrane attachment and assembly of the nuclear lamina. The chain is Torsin-1A-interacting protein 1 (TOR1AIP1) from Homo sapiens (Human).